A 208-amino-acid polypeptide reads, in one-letter code: Transmembrane protein 222 (208 aa).

The interval 1–34 (MAEAEGSSPLLLQPPPPPPRMAEVETPTGAETDM) is disordered. The Extracellular portion of the chain corresponds to 1–55 (MAEAEGSSPLLLQPPPPPPRMAEVETPTGAETDMKQYHGSGGVVMDVERSRFPYC). A helical transmembrane segment spans residues 56-76 (VVWTPIPVLTWFFPIIGHMGI). Residues 77–164 (CTSAGVIRDF…MRYNNSTNWN (88 aa)) are Cytoplasmic-facing. A helical membrane pass occupies residues 165–185 (MVTLCCFCLIYGKYVSVGAFV). A topological domain (extracellular) is located at residue Lys-186. A helical transmembrane segment spans residues 187–207 (TWLPFVLLLGIILTVSLVFNL). A topological domain (cytoplasmic) is located at residue Arg-208.

It localises to the membrane. Its subcellular location is the cell projection. The protein localises to the dendrite. This Mus musculus (Mouse) protein is Transmembrane protein 222 (Tmem222).